Reading from the N-terminus, the 605-residue chain is Formin-binding protein 1-like (605 aa).

Positions 1–263 (MSWGTELWDQ…AAKSVDERRD (263 aa)) constitute an F-BAR domain. Residues 66 to 258 (FTSCIAFFNI…EGMILAAKSV (193 aa)) are a coiled coil. The segment at 245–535 (SKCLEGMILA…EFDDEFEDDD (291 aa)) is interaction with CDC42. Phosphoserine is present on Ser-295. Positions 392 to 484 (LEDFSHLPPE…VEGKTGIRGD (93 aa)) form a coiled coil. Residues 397–474 (HLPPEQRRKK…IHKNEAWLSE (78 aa)) form the REM-1 domain. Residues 482–538 (RGDRRHSSDINHLVTQGRESPEGSYTDDANQEVRGPPQQHGHHSEFDDEFEDDDPLP) are disordered. 3 positions are modified to phosphoserine: Ser-488, Ser-501, and Ser-505. The tract at residues 522–605 (GHHSEFDDEF…VTLEKSSKGS (84 aa)) is interaction with DNM1. A compositionally biased stretch (acidic residues) spans 527 to 536 (FDDEFEDDDP). The region spanning 538–599 (PAIGHCKAIY…PTTYIDVTLE (62 aa)) is the SH3 domain. The tract at residues 541–597 (GHCKAIYPFDGHNEGTLAMKEGEVLYIIEEDKGDGWTRARRQNGEEGYVPTTYIDVT) is interaction with DNM2 and WASL. Residues 541-605 (GHCKAIYPFD…VTLEKSSKGS (65 aa)) are interaction with DAAM1, DIAPH1 and DIAPH2.

This sequence belongs to the FNBP1 family. In terms of assembly, homodimerizes, the dimers can polymerize end-to-end to form filamentous structures. Interacts with GTP-bound CDC42. Interacts with DAAM1, DIAPH1, DIAPH2, DNM1, DNM2 and WASL/N-WASP. Interacts with ATG3. Interacts (via SH3 domain) with ABI1, WASF2, CDC42 and WIPF1.

It is found in the cytoplasm. The protein localises to the cytoskeleton. The protein resides in the cell cortex. It localises to the cytoplasmic vesicle. Its subcellular location is the cell membrane. Functionally, required to coordinate membrane tubulation with reorganization of the actin cytoskeleton during endocytosis. May bind to lipids such as phosphatidylinositol 4,5-bisphosphate and phosphatidylserine and promote membrane invagination and the formation of tubules. Also promotes CDC42-induced actin polymerization by activating the WASL-WASPIP complex, the predominant form of WASL/N-WASP in cells. Actin polymerization may promote the fission of membrane tubules to form endocytic vesicles. Essential for autophagy of intracellular bacterial pathogens. In Mus musculus (Mouse), this protein is Formin-binding protein 1-like (Fnbp1l).